Here is a 139-residue protein sequence, read N- to C-terminus: uncharacterized protein (139 aa).

The next 2 membrane-spanning stretches (helical) occupy residues 35-55 (AYFK…AAAA) and 119-139 (CCLF…VFCV).

It is found in the membrane. This is an uncharacterized protein from Saccharomyces cerevisiae (strain ATCC 204508 / S288c) (Baker's yeast).